The chain runs to 68 residues: Defensin gallicin (68 aa).

The first 16 residues, 1 to 16 (MWIESDAGVAIDRHAR), serve as a signal peptide directing secretion.

In terms of processing, contains 5 disulfide bonds. In terms of tissue distribution, expressed in hemolymph, gills, digestive gland, foot, adductor muscles and mantle.

The protein resides in the secreted. The protein localises to the target cell membrane. Its function is as follows. Shows antibacterial activity against numerous Gram-positive bacteria. It selectively inhibits peptidoglycan biosynthesis through complex formation with the cell wall precursor lipid II (1:1 molar ratio) thus inhibiting cell wall synthesis. This chain is Defensin gallicin, found in Mytilus galloprovincialis (Mediterranean mussel).